Consider the following 138-residue polypeptide: Drosulfakinins (138 aa).

The first 33 residues, 1 to 33, serve as a signal peptide directing secretion; that stretch reads MGLRSCTHFATLVMPLWALAFCFLVLVPVPAQT. The propeptide occupies 34-73; the sequence is TSLQISKGDRRLQDLESNMGAESDQPNANLVGTSLSRFGD. At phenylalanine 82 the chain carries Phenylalanine amide. The propeptide occupies 86 to 108; that stretch reads VPRPIIPIELDLLMDNDDENTKA. Tyrosine 114 carries the sulfotyrosine modification. The residue at position 119 (phenylalanine 119) is a Phenylalanine amide. Sulfotyrosine is present on tyrosine 131. At phenylalanine 136 the chain carries Phenylalanine amide.

The protein belongs to the gastrin/cholecystokinin family.

The protein resides in the secreted. Functionally, drosulfakinin-0 (DSK 0) plays diverse biological roles including regulating gut muscle contraction in adults but not in larvae. The protein is Drosulfakinins of Drosophila teissieri (Fruit fly).